The sequence spans 165 residues: Protein SprT (165 aa).

One can recognise a SprT-like domain in the interval Glu10 to Val157. A Zn(2+)-binding site is contributed by His69. Glu70 is a catalytic residue. Residue His73 participates in Zn(2+) binding.

Belongs to the SprT family. Zn(2+) serves as cofactor.

Its subcellular location is the cytoplasm. The protein is Protein SprT of Pseudomonas paraeruginosa (strain DSM 24068 / PA7) (Pseudomonas aeruginosa (strain PA7)).